The chain runs to 316 residues: Cuticle collagen 12 (316 aa).

The N-terminal stretch at 1 to 36 (MTEDPKQIAQETESLRKVAFFGIAVSTIATLTAIIA) is a signal peptide. Low complexity-rich tracts occupy residues 127–157 (SGAAGPAGSPGQDGAPGNDGAPGAPGNPGQD) and 183–204 (APGQKGPSGAPGAPGQSGGAAL). Residues 127-316 (SGAAGPAGSP…CPPPRTAPGY (190 aa)) form a disordered region. Triple-helical region regions lie at residues 128–157 (GAAGPAGSPGQDGAPGNDGAPGAPGNPGQD), 176–202 (GPPGPSGAPGQKGPSGAPGAPGQSGGA), 206–235 (GPPGPAGPPGPAGQPGSNGNAGAPGAPGQV), 240–266 (GTPGPAGPPGSPGPAGAPGQPGQAGSS), and 269–304 (GGPGPQGDAGAPGAPGAPGQAGAPGQDGESGSEGAC). Residues 205-217 (PGPPGPAGPPGPA) are compositionally biased toward pro residues. Residues 219-234 (QPGSNGNAGAPGAPGQ) are compositionally biased toward low complexity. The segment covering 241–251 (TPGPAGPPGSP) has biased composition (pro residues). 2 stretches are compositionally biased toward low complexity: residues 256–266 (APGQPGQAGSS) and 276–295 (DAGAPGAPGAPGQAGAPGQD). Over residues 307-316 (CPPPRTAPGY) the composition is skewed to pro residues.

Belongs to the cuticular collagen family. As to quaternary structure, collagen polypeptide chains are complexed within the cuticle by disulfide bonds and other types of covalent cross-links.

In terms of biological role, nematode cuticles are composed largely of collagen-like proteins. The cuticle functions both as an exoskeleton and as a barrier to protect the worm from its environment. The polypeptide is Cuticle collagen 12 (col-12) (Caenorhabditis elegans).